The following is a 114-amino-acid chain: Iron-sulfur cluster insertion protein ErpA (114 aa).

Iron-sulfur cluster contacts are provided by Cys42, Cys106, and Cys108.

This sequence belongs to the HesB/IscA family. As to quaternary structure, homodimer. The cofactor is iron-sulfur cluster.

Required for insertion of 4Fe-4S clusters for at least IspG. In Proteus mirabilis (strain HI4320), this protein is Iron-sulfur cluster insertion protein ErpA.